Reading from the N-terminus, the 160-residue chain is Transcription elongation factor GreA (160 aa).

Residues 53–73 (AREEQGMVEARIRDIEGRLQN) adopt a coiled-coil conformation.

Belongs to the GreA/GreB family.

In terms of biological role, necessary for efficient RNA polymerase transcription elongation past template-encoded arresting sites. The arresting sites in DNA have the property of trapping a certain fraction of elongating RNA polymerases that pass through, resulting in locked ternary complexes. Cleavage of the nascent transcript by cleavage factors such as GreA or GreB allows the resumption of elongation from the new 3'terminus. GreA releases sequences of 2 to 3 nucleotides. The sequence is that of Transcription elongation factor GreA from Pseudomonas putida (strain ATCC 47054 / DSM 6125 / CFBP 8728 / NCIMB 11950 / KT2440).